The following is a 380-amino-acid chain: O-phospho-L-seryl-tRNA:Cys-tRNA synthase (380 aa).

Residues 86–87 (AR), Asn-192, and 215–217 (SGH) each bind pyridoxal 5'-phosphate. Lys-218 bears the N6-(pyridoxal phosphate)lysine mark.

It belongs to the SepCysS family. Homodimer. Interacts with SepRS. It depends on pyridoxal 5'-phosphate as a cofactor.

The catalysed reaction is O-phospho-L-seryl-tRNA(Cys) + hydrogen sulfide + H(+) = L-cysteinyl-tRNA(Cys) + phosphate. Its function is as follows. Converts O-phospho-L-seryl-tRNA(Cys) (Sep-tRNA(Cys)) to L-cysteinyl-tRNA(Cys) (Cys-tRNA(Cys)). The chain is O-phospho-L-seryl-tRNA:Cys-tRNA synthase from Methanococcus maripaludis (strain C5 / ATCC BAA-1333).